Reading from the N-terminus, the 158-residue chain is Probable cyclic pyranopterin monophosphate synthase (158 aa).

Substrate-binding positions include 78–80 (MCH) and 114–115 (ME). The active site involves aspartate 129.

The protein belongs to the MoaC family. Homohexamer; trimer of dimers.

It carries out the reaction (8S)-3',8-cyclo-7,8-dihydroguanosine 5'-triphosphate = cyclic pyranopterin phosphate + diphosphate. It participates in cofactor biosynthesis; molybdopterin biosynthesis. Its function is as follows. Catalyzes the conversion of (8S)-3',8-cyclo-7,8-dihydroguanosine 5'-triphosphate to cyclic pyranopterin monophosphate (cPMP). The protein is Probable cyclic pyranopterin monophosphate synthase of Methanosarcina acetivorans (strain ATCC 35395 / DSM 2834 / JCM 12185 / C2A).